Here is a 297-residue protein sequence, read N- to C-terminus: MAPSQLPAIFNPTSQDIEQLLAAQCHLGSKNLQVHMEPYLWKTRPDGINVINIGKTWEKIVLAARIIAAIDNPADICVISARPYGQRAVLKFAAHTGAVAIAGRFTPGNFTNYITRSFKEPRLIIVTDPRTDAQAIKEASYVNIPVIALCDTDSPTEFVDVAIPTNNKGRHSIGLVWWMLAREVLRLRGSIASREAEWDTMVDLYFYRDPEAEENKDAIEEAKAPGADEVGAAAVDQGFAGTGDWEVSGATAGAFTAASNTAAAGGASWDAAEPSDWAATPAAAGQEWAASGATEQW.

Residues 266-297 (GASWDAAEPSDWAATPAAAGQEWAASGATEQW) are disordered. Residues 282 to 297 (AAAGQEWAASGATEQW) show a composition bias toward low complexity.

This sequence belongs to the universal ribosomal protein uS2 family. In terms of assembly, component of the small ribosomal subunit. Mature ribosomes consist of a small (40S) and a large (60S) subunit. The 40S subunit contains about 33 different proteins and 1 molecule of RNA (18S). The 60S subunit contains about 49 different proteins and 3 molecules of RNA (25S, 5.8S and 5S). Interacts with rps21.

It localises to the cytoplasm. Functionally, required for the assembly and/or stability of the 40S ribosomal subunit. Required for the processing of the 20S rRNA-precursor to mature 18S rRNA in a late step of the maturation of 40S ribosomal subunits. This Sclerotinia sclerotiorum (strain ATCC 18683 / 1980 / Ss-1) (White mold) protein is Small ribosomal subunit protein uS2 (rps0).